The primary structure comprises 126 residues: Probable prefoldin subunit 6 (126 aa).

The protein belongs to the prefoldin subunit beta family. As to quaternary structure, heterohexamer of two PFD-alpha type and four PFD-beta type subunits. Expressed in embryonic blastomeres and gonads.

It is found in the cytoplasm. Functionally, binds specifically to cytosolic chaperonin (c-CPN) and transfers target proteins to it. Binds to nascent polypeptide chain and promotes folding in an environment in which there are many competing pathways for nonnative proteins. Required for positioning of the mitotic spindle. In Caenorhabditis elegans, this protein is Probable prefoldin subunit 6 (pfd-6).